The chain runs to 660 residues: DNA primase (660 aa).

Residues 40-64 (CPFHKEKTPSFTVSPDKQFYYCFGC) form a CHC2-type zinc finger. The interval 94 to 115 (GMEVPREQGRRDQKPRQPTDSP) is disordered. A compositionally biased stretch (basic and acidic residues) spans 97–110 (VPREQGRRDQKPRQ). In terms of domain architecture, Toprim spans 261-343 (DEIIVVEGYM…GRRARFLFLP (83 aa)). Mg(2+) is bound by residues E267, D311, and D313. 2 disordered regions span residues 425-449 (DPQQ…DPGY) and 476-519 (QAWK…APVE). Positions 428-442 (QVEQLAQQAPATSSM) are enriched in polar residues. Positions 488–498 (PWSDKPWDKNR) are enriched in basic and acidic residues.

It belongs to the DnaG primase family. In terms of assembly, monomer. Interacts with DnaB. The cofactor is Zn(2+). Requires Mg(2+) as cofactor.

The catalysed reaction is ssDNA + n NTP = ssDNA/pppN(pN)n-1 hybrid + (n-1) diphosphate.. Its function is as follows. RNA polymerase that catalyzes the synthesis of short RNA molecules used as primers for DNA polymerase during DNA replication. This is DNA primase from Pseudomonas putida (strain ATCC 47054 / DSM 6125 / CFBP 8728 / NCIMB 11950 / KT2440).